Consider the following 347-residue polypeptide: 4-hydroxythreonine-4-phosphate dehydrogenase (347 aa).

Residues histidine 137 and threonine 138 each coordinate substrate. Histidine 174, histidine 219, and histidine 274 together coordinate a divalent metal cation. The substrate site is built by lysine 282, asparagine 291, and arginine 300.

The protein belongs to the PdxA family. As to quaternary structure, homodimer. Zn(2+) serves as cofactor. The cofactor is Mg(2+). Co(2+) is required as a cofactor.

It is found in the cytoplasm. The catalysed reaction is 4-(phosphooxy)-L-threonine + NAD(+) = 3-amino-2-oxopropyl phosphate + CO2 + NADH. It participates in cofactor biosynthesis; pyridoxine 5'-phosphate biosynthesis; pyridoxine 5'-phosphate from D-erythrose 4-phosphate: step 4/5. Functionally, catalyzes the NAD(P)-dependent oxidation of 4-(phosphooxy)-L-threonine (HTP) into 2-amino-3-oxo-4-(phosphooxy)butyric acid which spontaneously decarboxylates to form 3-amino-2-oxopropyl phosphate (AHAP). The polypeptide is 4-hydroxythreonine-4-phosphate dehydrogenase (Cupriavidus pinatubonensis (strain JMP 134 / LMG 1197) (Cupriavidus necator (strain JMP 134))).